Reading from the N-terminus, the 196-residue chain is Peptidyl-tRNA hydrolase (196 aa).

Y18 lines the tRNA pocket. The active-site Proton acceptor is H23. TRNA is bound by residues F69, N71, and N117.

It belongs to the PTH family. As to quaternary structure, monomer.

The protein resides in the cytoplasm. It catalyses the reaction an N-acyl-L-alpha-aminoacyl-tRNA + H2O = an N-acyl-L-amino acid + a tRNA + H(+). In terms of biological role, hydrolyzes ribosome-free peptidyl-tRNAs (with 1 or more amino acids incorporated), which drop off the ribosome during protein synthesis, or as a result of ribosome stalling. Functionally, catalyzes the release of premature peptidyl moieties from peptidyl-tRNA molecules trapped in stalled 50S ribosomal subunits, and thus maintains levels of free tRNAs and 50S ribosomes. The polypeptide is Peptidyl-tRNA hydrolase (Vibrio parahaemolyticus serotype O3:K6 (strain RIMD 2210633)).